Reading from the N-terminus, the 64-residue chain is Large ribosomal subunit protein bL35 (64 aa).

Belongs to the bacterial ribosomal protein bL35 family.

The protein is Large ribosomal subunit protein bL35 of Chlorobium limicola (strain DSM 245 / NBRC 103803 / 6330).